The following is a 93-amino-acid chain: Small ribosomal subunit protein bS18 (93 aa).

This sequence belongs to the bacterial ribosomal protein bS18 family. Part of the 30S ribosomal subunit. Forms a tight heterodimer with protein bS6.

In terms of biological role, binds as a heterodimer with protein bS6 to the central domain of the 16S rRNA, where it helps stabilize the platform of the 30S subunit. The protein is Small ribosomal subunit protein bS18 of Paracidovorax citrulli (strain AAC00-1) (Acidovorax citrulli).